A 92-amino-acid chain; its full sequence is Major allergen I polypeptide chain 1 (92 aa).

The N-terminal stretch at 1-22 is a signal peptide; that stretch reads MKGACVLVLLWAALLLISGGNC.

It belongs to the secretoglobin family. In terms of assembly, heterotetramer composed of two non-covalently linked disulfide-linked heterodimer of chains 1 and 2. In terms of tissue distribution, saliva and sebaceous glands.

Its subcellular location is the secreted. This chain is Major allergen I polypeptide chain 1 (CH1), found in Felis catus (Cat).